A 362-amino-acid polypeptide reads, in one-letter code: MASPIEVRLQMAYPDFTVRTDLSLPGSGITALFGPSGSGKTTCLRCIAGLEKADQSFIRVHDEVWQDTEKGIFLAPYKRAIGYVFQEASLFAHLSVRDNLEFGMKRIPRQQRRIQLPQASELLGIDHLLQRNPDKLSGGERQRVGIARALLTSPRLMLLDEPLAALDTRRKSEILPYLERLHRELDIPMLYVSHAQDEVARLADHLVLLDAGNVLASGPIHETLARLDLPLAMGSDAGVVIEGTVSAYDQHYQLLTVTLPDSKLSMRVAHAQMQVGTLLRIKVQARDVSLNLQPDYQSSILNRLPVTVIEEALADNSAHVLVKLDAGGTPLLARITRYSSDQLNLHRGQSLWAQIKAVAVLA.

In terms of domain architecture, ABC transporter spans 2 to 236; the sequence is ASPIEVRLQM…LDLPLAMGSD (235 aa). Position 34–41 (34–41) interacts with ATP; the sequence is GPSGSGKT. The Mop domain occupies 297–362; sequence QSSILNRLPV…AQIKAVAVLA (66 aa).

It belongs to the ABC transporter superfamily. Molybdate importer (TC 3.A.1.8) family. In terms of assembly, the complex is composed of two ATP-binding proteins (ModC), two transmembrane proteins (ModB) and a solute-binding protein (ModA).

Its subcellular location is the cell inner membrane. The catalysed reaction is molybdate(out) + ATP + H2O = molybdate(in) + ADP + phosphate + H(+). Part of the ABC transporter complex ModABC involved in molybdenum import. Responsible for energy coupling to the transport system. The polypeptide is Molybdenum import ATP-binding protein ModC (Pseudomonas syringae pv. syringae (strain B728a)).